The primary structure comprises 370 residues: DNA replication and repair protein RecF (370 aa).

30-37 (GENAQGKT) contacts ATP.

This sequence belongs to the RecF family.

It is found in the cytoplasm. In terms of biological role, the RecF protein is involved in DNA metabolism; it is required for DNA replication and normal SOS inducibility. RecF binds preferentially to single-stranded, linear DNA. It also seems to bind ATP. This chain is DNA replication and repair protein RecF, found in Staphylococcus carnosus (strain TM300).